Here is a 133-residue protein sequence, read N- to C-terminus: Ubiquitin-like FUBI-ribosomal protein eS30 fusion protein (133 aa).

One can recognise a Ubiquitin-like domain in the interval 1-74 (MQLFVRAQEL…LEVAGRMLGG (74 aa)). Lys-125 carries the N6-succinyllysine modification.

In the N-terminal section; belongs to the ubiquitin family. It in the C-terminal section; belongs to the eukaryotic ribosomal protein eS30 family. In terms of assembly, component of the 40S subunit of the ribosome. FUBI is cleaved from ribosomal protein S30 by the deubiquitinase USP36 before the assembly of ribosomal protein S30 into pre-40S ribosomal particles. FUBI removal from ribosomal protein S30 is a crucial event for the final maturation of pre-40S particles.

It is found in the cytoplasm. The protein localises to the nucleus. May have pro-apoptotic activity. Its function is as follows. Component of the 40S subunit of the ribosome. Contributes to the assembly and function of 40S ribosomal subunits. This chain is Ubiquitin-like FUBI-ribosomal protein eS30 fusion protein (FAU), found in Oryctolagus cuniculus (Rabbit).